The chain runs to 395 residues: Elongation factor Tu (395 aa).

Residues 10 to 204 form the tr-type G domain; sequence KPHVNIGTIG…AVDEYIPTPQ (195 aa). The segment at 19–26 is G1; it reads GHVDHGKT. Residue 19 to 26 coordinates GTP; that stretch reads GHVDHGKT. Threonine 26 serves as a coordination point for Mg(2+). Residues 60-64 are G2; that stretch reads GITIS. The interval 81-84 is G3; sequence DCPG. GTP contacts are provided by residues 81–85 and 136–139; these read DCPGH and NKCD. The tract at residues 136–139 is G4; it reads NKCD. A G5 region spans residues 174–176; it reads SAL.

This sequence belongs to the TRAFAC class translation factor GTPase superfamily. Classic translation factor GTPase family. EF-Tu/EF-1A subfamily. Monomer.

The protein resides in the cytoplasm. It catalyses the reaction GTP + H2O = GDP + phosphate + H(+). Its function is as follows. GTP hydrolase that promotes the GTP-dependent binding of aminoacyl-tRNA to the A-site of ribosomes during protein biosynthesis. The sequence is that of Elongation factor Tu from Geobacillus stearothermophilus (Bacillus stearothermophilus).